The following is a 664-amino-acid chain: NADH-ubiquinone oxidoreductase chain 5 (664 aa).

Helical transmembrane passes span 2 to 22 (LLLT…LFGF), 28 to 48 (GSVF…LIII), 77 to 97 (FLFD…STLV), 120 to 140 (LFTF…MFVG), 168 to 188 (AMLV…TIFY), 210 to 230 (FIFF…IFIG), 250 to 270 (GPTP…GVYL), 285 to 305 (LKII…VGLV), 321 to 341 (LGYM…FHLS), 342 to 362 (NHAY…HAMG), 376 to 396 (ILPF…GFPF), 424 to 444 (LGTI…FFAF), 462 to 482 (PLEM…IGYI), 521 to 541 (LPVI…FFKF), 590 to 610 (IDKG…FSFL), 614 to 634 (IILL…ISTI), and 639 to 659 (IIFF…FLFI).

Belongs to the complex I subunit 5 family.

It is found in the mitochondrion inner membrane. It carries out the reaction a ubiquinone + NADH + 5 H(+)(in) = a ubiquinol + NAD(+) + 4 H(+)(out). Core subunit of the mitochondrial membrane respiratory chain NADH dehydrogenase (Complex I) that is believed to belong to the minimal assembly required for catalysis. Complex I functions in the transfer of electrons from NADH to the respiratory chain. The immediate electron acceptor for the enzyme is believed to be ubiquinone. This is NADH-ubiquinone oxidoreductase chain 5 (ND5) from Phytophthora infestans (Potato late blight agent).